Here is a 370-residue protein sequence, read N- to C-terminus: 3-dehydroquinate synthase (370 aa).

NAD(+) contacts are provided by residues 112–116 (GVVGD), 136–137 (TS), Lys149, Lys158, and 176–179 (TLRT). Residues Glu191, His254, and His276 each contribute to the Zn(2+) site.

The protein belongs to the sugar phosphate cyclases superfamily. Dehydroquinate synthase family. Co(2+) serves as cofactor. It depends on Zn(2+) as a cofactor. Requires NAD(+) as cofactor.

The protein localises to the cytoplasm. It catalyses the reaction 7-phospho-2-dehydro-3-deoxy-D-arabino-heptonate = 3-dehydroquinate + phosphate. It functions in the pathway metabolic intermediate biosynthesis; chorismate biosynthesis; chorismate from D-erythrose 4-phosphate and phosphoenolpyruvate: step 2/7. In terms of biological role, catalyzes the conversion of 3-deoxy-D-arabino-heptulosonate 7-phosphate (DAHP) to dehydroquinate (DHQ). The polypeptide is 3-dehydroquinate synthase (Xanthomonas campestris pv. campestris (strain 8004)).